A 505-amino-acid chain; its full sequence is Sensor protein FixL (505 aa).

Residues 14–85 (RGEHFRVRIE…SAIKRVSERG (72 aa)) enclose the PAS 1 domain. The PAC 1 domain maps to 88–140 (FDVSFRVAGTSNAGQWIRARAGLIRDEAGTARHLSGIFLDIDEEKQVEGALRT). The PAS 2 domain occupies 141–208 (RETHLRSILH…RHDSYISRYR (68 aa)). His-200 is a heme binding site. Residues 209 to 268 (TTSDPHIIGIGRIVTGKRRDGTTFPMHLSIGEMQSGGEPYFTGFVRDLTEHQQTQARLQE) enclose the PAC 2 domain. One can recognise a Histidine kinase domain in the interval 288–503 (ALAHELNQPL…TFRFTLPAAD (216 aa)). His-291 bears the Phosphohistidine; by autocatalysis mark.

The cofactor is heme.

It carries out the reaction ATP + protein L-histidine = ADP + protein N-phospho-L-histidine.. The heme moiety regulates the kinase activity. Its function is as follows. Putative oxygen sensor; modulates the activity of FixJ, a transcriptional activator of nitrogen fixation fixK gene. FixL probably acts as a kinase that phosphorylates FixJ. This chain is Sensor protein FixL (fixL), found in Bradyrhizobium diazoefficiens (strain JCM 10833 / BCRC 13528 / IAM 13628 / NBRC 14792 / USDA 110).